The chain runs to 357 residues: Homoserine kinase (357 aa).

K133 is covalently cross-linked (Glycyl lysine isopeptide (Lys-Gly) (interchain with G-Cter in ubiquitin)).

Belongs to the GHMP kinase family. Homoserine kinase subfamily. In terms of assembly, homodimer.

The enzyme catalyses L-homoserine + ATP = O-phospho-L-homoserine + ADP + H(+). The protein operates within amino-acid biosynthesis; L-threonine biosynthesis; L-threonine from L-aspartate: step 4/5. Its function is as follows. Commits homoserine to the threonine biosynthesis pathway by catalyzing its O-phosphorylation. The protein is Homoserine kinase (THR1) of Saccharomyces cerevisiae (strain ATCC 204508 / S288c) (Baker's yeast).